Here is a 297-residue protein sequence, read N- to C-terminus: tRNA dimethylallyltransferase (297 aa).

Residue 8 to 15 participates in ATP binding; that stretch reads GATASGKS. Residue 10-15 participates in substrate binding; sequence TASGKS. The interaction with substrate tRNA stretch occupies residues 33–36; sequence DSLS.

Belongs to the IPP transferase family. In terms of assembly, monomer. Mg(2+) serves as cofactor.

The enzyme catalyses adenosine(37) in tRNA + dimethylallyl diphosphate = N(6)-dimethylallyladenosine(37) in tRNA + diphosphate. Its function is as follows. Catalyzes the transfer of a dimethylallyl group onto the adenine at position 37 in tRNAs that read codons beginning with uridine, leading to the formation of N6-(dimethylallyl)adenosine (i(6)A). The protein is tRNA dimethylallyltransferase of Sulfurimonas denitrificans (strain ATCC 33889 / DSM 1251) (Thiomicrospira denitrificans (strain ATCC 33889 / DSM 1251)).